The sequence spans 433 residues: MNRLLIRGATILTMEGPEAIIETGELLIEDGWITHVGLPGSASGSFDMDEVIEADGQVAMPGFINCHTHAAMTLLRGYADDLPLMTWLSEKIWPFEGRMTNEDIYWGTMLACLEMIKSGTTCFGDMYDCMHDVARAVEKTGMRAMLSRGMIGIAPTADKALIEAEELARNWNGKADGRITVMVAPHAPYTCPPDYLDKAMNLAAKHKLGINIHLAETLTEFEDIKKQYGKTPVKHLDQLGLFKLPVLAAHCVHLDEEDMDILAQKAMGVAYNPQSNMKLASGIAPVAKLLELGATVGIGTDGTASNNNLDMLEELRAGSFLQKVSTMNPEVIPAYRALQMATIDGALCMGLGDRVGLIKEGMRGDVILLDTQQPHMCPRHNLVANIAYAANSSDVRTVVIDGKVVMLDRVVKTIDEERVMYEVRERAARLAGK.

2 residues coordinate Zn(2+): His-67 and His-69. Positions 96, 148, and 186 each coordinate substrate. His-213 is a binding site for Zn(2+). Residues Glu-216 and Asp-301 each coordinate substrate. Asp-301 lines the Zn(2+) pocket.

It belongs to the metallo-dependent hydrolases superfamily. MTA/SAH deaminase family. It depends on Zn(2+) as a cofactor.

It carries out the reaction S-adenosyl-L-homocysteine + H2O + H(+) = S-inosyl-L-homocysteine + NH4(+). The catalysed reaction is S-methyl-5'-thioadenosine + H2O + H(+) = S-methyl-5'-thioinosine + NH4(+). Its function is as follows. Catalyzes the deamination of 5-methylthioadenosine and S-adenosyl-L-homocysteine into 5-methylthioinosine and S-inosyl-L-homocysteine, respectively. Is also able to deaminate adenosine. In Desulforamulus reducens (strain ATCC BAA-1160 / DSM 100696 / MI-1) (Desulfotomaculum reducens), this protein is 5-methylthioadenosine/S-adenosylhomocysteine deaminase.